The following is a 498-amino-acid chain: MKKVSTLDLLFVAIMGVSPAAFAADLIDVSKLPSKAAQGAPGPVTLQAAVGAGGADELKAIRSTTLPNGKQVTRYEQFHNGVRVVGEAITEVKGPGKSVAARRSGHFVANIAADLPGSTTAAVSAEQVLAQAKSLKAQGRKTENDKVELVIRLGENNIAQLVYNVSYLIPGEGLSRPHFVIDAKTGEVLDQWEGLAHAEAGGPGGNQKIGKYTYGSDYGPLIVNDRCEMDDGNVITVDMNGSTNDSKTTPFRFACPTNTYKQVNGAYSPLNDAHFFGGVVFNLYRDWFGTSPLTHKLYMKVHYGRSVENAYWDGTAMLFGDGATMFYPLVSLDVAAHEVSHGFTEQNSGLIYRGQSGGMNEAFSDMAGEAAEFYMRGKNDFLIGYDIKKGSGALRYMDQPSRDGRSIDNASQYYNGIDVHHSSGVYNRAFYLLANSPGWDTRKAFEVFVDANRYYWTATSNYNSGACGVISSAQNRNYSAADVTRAFSTVGVTCPSAL.

The N-terminal stretch at 1-23 is a signal peptide; that stretch reads MKKVSTLDLLFVAIMGVSPAAFA. A propeptide spanning residues 24 to 197 is cleaved from the precursor; it reads ADLIDVSKLP…VLDQWEGLAH (174 aa). Residues C227 and C255 are joined by a disulfide bond. T236 carries the post-translational modification Phosphothreonine. D333 lines the Ca(2+) pocket. H337 is a Zn(2+) binding site. E338 is an active-site residue. Zn(2+)-binding residues include H341 and E361. E369, E372, D380, and L382 together coordinate Ca(2+). H420 acts as the Proton donor in catalysis. The cysteines at positions 467 and 494 are disulfide-linked.

This sequence belongs to the peptidase M4 family. The cofactor is Ca(2+). It depends on Zn(2+) as a cofactor. Made as a pre-pro-protein which is exported to the periplasm. Probably autocatalyzes cleavage of its pro-peptide. The pro-peptide can be secreted with mature elastase.

It localises to the secreted. It carries out the reaction Hydrolysis of proteins including elastin, collagen types III and IV, fibronectin and immunoglobulin A, generally with bulky hydrophobic group at P1'. Insulin B chain cleavage pattern identical to that of thermolysin, but specificity differs in other respects.. Its function is as follows. Cleaves host elastase, collagen, IgI and several complement components as well as endogenous pro-aminopeptidase, pro-chitin-binding protein (cbpD). Cleaves its own pro-peptide. Involved in the pathogenesis of P.aeruginosa infections. The chain is Elastase (lasB) from Pseudomonas aeruginosa (strain UCBPP-PA14).